Reading from the N-terminus, the 394-residue chain is ATP phosphoribosyltransferase regulatory subunit (394 aa).

This sequence belongs to the class-II aminoacyl-tRNA synthetase family. HisZ subfamily. As to quaternary structure, heteromultimer composed of HisG and HisZ subunits.

It localises to the cytoplasm. It functions in the pathway amino-acid biosynthesis; L-histidine biosynthesis; L-histidine from 5-phospho-alpha-D-ribose 1-diphosphate: step 1/9. Functionally, required for the first step of histidine biosynthesis. May allow the feedback regulation of ATP phosphoribosyltransferase activity by histidine. The polypeptide is ATP phosphoribosyltransferase regulatory subunit (Teredinibacter turnerae (strain ATCC 39867 / T7901)).